Consider the following 166-residue polypeptide: Probable chemoreceptor glutamine deamidase CheD (166 aa).

This sequence belongs to the CheD family.

It carries out the reaction L-glutaminyl-[protein] + H2O = L-glutamyl-[protein] + NH4(+). Functionally, probably deamidates glutamine residues to glutamate on methyl-accepting chemotaxis receptors (MCPs), playing an important role in chemotaxis. This Desulforamulus reducens (strain ATCC BAA-1160 / DSM 100696 / MI-1) (Desulfotomaculum reducens) protein is Probable chemoreceptor glutamine deamidase CheD.